The following is a 377-amino-acid chain: Chaperone protein DnaJ (377 aa).

The region spanning 4 to 69 is the J domain; that stretch reads DYYEALGVTR…QKRAAYDRFG (66 aa). The CR-type zinc finger occupies 135-213; sequence GKTAQIRVPT…CHGQGRVTQE (79 aa). 8 residues coordinate Zn(2+): Cys-148, Cys-151, Cys-165, Cys-168, Cys-187, Cys-190, Cys-201, and Cys-204. CXXCXGXG motif repeat units lie at residues 148–155, 165–172, 187–194, and 201–208; these read CDECSGSG, CTMCSGSG, CPGCNGRG, and CEKCHGQG.

The protein belongs to the DnaJ family. Homodimer. Zn(2+) is required as a cofactor.

It localises to the cytoplasm. Functionally, participates actively in the response to hyperosmotic and heat shock by preventing the aggregation of stress-denatured proteins and by disaggregating proteins, also in an autonomous, DnaK-independent fashion. Unfolded proteins bind initially to DnaJ; upon interaction with the DnaJ-bound protein, DnaK hydrolyzes its bound ATP, resulting in the formation of a stable complex. GrpE releases ADP from DnaK; ATP binding to DnaK triggers the release of the substrate protein, thus completing the reaction cycle. Several rounds of ATP-dependent interactions between DnaJ, DnaK and GrpE are required for fully efficient folding. Also involved, together with DnaK and GrpE, in the DNA replication of plasmids through activation of initiation proteins. This Brucella canis (strain ATCC 23365 / NCTC 10854 / RM-666) protein is Chaperone protein DnaJ.